A 346-amino-acid chain; its full sequence is Fe(3+) ions import ATP-binding protein FbpC 3 (346 aa).

The region spanning 5 to 235 is the ABC transporter domain; the sequence is LEVDGVDKSF…PIDVATAEFI (231 aa). Position 37–44 (37–44) interacts with ATP; the sequence is GPSGCGKT.

This sequence belongs to the ABC transporter superfamily. Fe(3+) ion importer (TC 3.A.1.10) family. In terms of assembly, the complex is composed of two ATP-binding proteins (FbpC), two transmembrane proteins (FbpB) and a solute-binding protein (FbpA).

It localises to the cell membrane. The enzyme catalyses Fe(3+)(out) + ATP + H2O = Fe(3+)(in) + ADP + phosphate + H(+). Functionally, part of the ABC transporter complex FbpABC involved in Fe(3+) ions import. Responsible for energy coupling to the transport system. The polypeptide is Fe(3+) ions import ATP-binding protein FbpC 3 (Rhodococcus jostii (strain RHA1)).